Here is a 679-residue protein sequence, read N- to C-terminus: Glycine--tRNA ligase beta subunit (679 aa).

Belongs to the class-II aminoacyl-tRNA synthetase family. As to quaternary structure, tetramer of two alpha and two beta subunits.

The protein localises to the cytoplasm. It catalyses the reaction tRNA(Gly) + glycine + ATP = glycyl-tRNA(Gly) + AMP + diphosphate. This is Glycine--tRNA ligase beta subunit from Streptococcus agalactiae serotype V (strain ATCC BAA-611 / 2603 V/R).